A 264-amino-acid chain; its full sequence is 3-methyl-2-oxobutanoate hydroxymethyltransferase (264 aa).

Residues aspartate 45 and aspartate 84 each contribute to the Mg(2+) site. 3-methyl-2-oxobutanoate-binding positions include 45–46 (DS), aspartate 84, and lysine 112. Glutamate 114 provides a ligand contact to Mg(2+). Catalysis depends on glutamate 181, which acts as the Proton acceptor.

This sequence belongs to the PanB family. As to quaternary structure, homodecamer; pentamer of dimers. Requires Mg(2+) as cofactor.

It is found in the cytoplasm. The enzyme catalyses 3-methyl-2-oxobutanoate + (6R)-5,10-methylene-5,6,7,8-tetrahydrofolate + H2O = 2-dehydropantoate + (6S)-5,6,7,8-tetrahydrofolate. It functions in the pathway cofactor biosynthesis; (R)-pantothenate biosynthesis; (R)-pantoate from 3-methyl-2-oxobutanoate: step 1/2. Functionally, catalyzes the reversible reaction in which hydroxymethyl group from 5,10-methylenetetrahydrofolate is transferred onto alpha-ketoisovalerate to form ketopantoate. The polypeptide is 3-methyl-2-oxobutanoate hydroxymethyltransferase (Shewanella pealeana (strain ATCC 700345 / ANG-SQ1)).